Here is a 616-residue protein sequence, read N- to C-terminus: Membrane protein insertase YidC (616 aa).

Residues 9–29 traverse the membrane as a helical segment; sequence ILAVILSGLVLIAWQYFYNVP. The disordered stretch occupies residues 37–80; it reads QQQAQAELQKTTPQPTASATPGATPQSGGAAQPSTPAAGQQAQP. The segment covering 44–71 has biased composition (polar residues); that stretch reads LQKTTPQPTASATPGATPQSGGAAQPST. The next 4 membrane-spanning stretches (helical) occupy residues 388–408, 462–482, 520–540, and 559–579; these read FFGN…LLFF, LPVV…FVTI, VFGH…TMWF, and WMPL…VIYW.

The protein belongs to the OXA1/ALB3/YidC family. Type 1 subfamily. As to quaternary structure, interacts with the Sec translocase complex via SecD. Specifically interacts with transmembrane segments of nascent integral membrane proteins during membrane integration.

The protein resides in the cell inner membrane. Required for the insertion and/or proper folding and/or complex formation of integral membrane proteins into the membrane. Involved in integration of membrane proteins that insert both dependently and independently of the Sec translocase complex, as well as at least some lipoproteins. Aids folding of multispanning membrane proteins. The chain is Membrane protein insertase YidC from Bradyrhizobium diazoefficiens (strain JCM 10833 / BCRC 13528 / IAM 13628 / NBRC 14792 / USDA 110).